We begin with the raw amino-acid sequence, 349 residues long: Putative ABC transporter permease protein MJ0087 (349 aa).

The next 9 helical transmembrane spans lie at 15-35 (IIFGIILLITLFLSSIYALCV), 69-89 (IFAAIISGMSLAVAGAVMQCI), 100-120 (MGISHGAMFGACFAIIMFGFG), 135-155 (MITIFAFLGALIGVVVILLLA), 166-186 (ILAGVAMSSLFTAGTMLIQYF), 206-226 (AIWTEIYIMAAVMIPSLIYFM), 254-274 (LIGMLVASLLTSVNVAFLGII), 295-315 (FLIPISALFGAVLLLIADTFA), and 318-338 (IIAPIVLPVGILTSFLGAPMF).

The protein belongs to the binding-protein-dependent transport system permease family. FecCD subfamily.

The protein localises to the cell membrane. In terms of biological role, probably part of a binding-protein-dependent transport system. Probably responsible for the translocation of the substrate across the membrane. The chain is Putative ABC transporter permease protein MJ0087 from Methanocaldococcus jannaschii (strain ATCC 43067 / DSM 2661 / JAL-1 / JCM 10045 / NBRC 100440) (Methanococcus jannaschii).